A 104-amino-acid polypeptide reads, in one-letter code: Ig lambda-2 chain C region (104 aa).

In terms of domain architecture, Ig-like spans 6-99 (PTLTVFPPST…EGNTVEKSLS (94 aa)). A disulfide bridge connects residues Cys27 and Cys85.

In Rattus norvegicus (Rat), this protein is Ig lambda-2 chain C region.